The sequence spans 1342 residues: DNA-directed RNA polymerase subunit beta (1342 aa).

The protein belongs to the RNA polymerase beta chain family. In terms of assembly, the RNAP catalytic core consists of 2 alpha, 1 beta, 1 beta' and 1 omega subunit. When a sigma factor is associated with the core the holoenzyme is formed, which can initiate transcription.

The catalysed reaction is RNA(n) + a ribonucleoside 5'-triphosphate = RNA(n+1) + diphosphate. DNA-dependent RNA polymerase catalyzes the transcription of DNA into RNA using the four ribonucleoside triphosphates as substrates. This chain is DNA-directed RNA polymerase subunit beta, found in Pectobacterium atrosepticum (strain SCRI 1043 / ATCC BAA-672) (Erwinia carotovora subsp. atroseptica).